The following is a 240-amino-acid chain: Cell division protein FtsQ (240 aa).

The Cytoplasmic portion of the chain corresponds to 1–7; that stretch reads MTGPGLR. A helical transmembrane segment spans residues 8 to 28; sequence LLAGMGLAGALVLGLSLWLHF. The Periplasmic portion of the chain corresponds to 29 to 240; the sequence is DPDQHLPIGS…EADNDGGNAR (212 aa). Residues 34–102 form the POTRA domain; it reads LPIGSIQITG…DTLEVHVTEP (69 aa).

Belongs to the FtsQ/DivIB family. FtsQ subfamily. Part of a complex composed of FtsB, FtsL and FtsQ.

The protein localises to the cell inner membrane. In terms of biological role, essential cell division protein. May link together the upstream cell division proteins, which are predominantly cytoplasmic, with the downstream cell division proteins, which are predominantly periplasmic. May control correct divisome assembly. This chain is Cell division protein FtsQ, found in Thioalkalivibrio sp. (strain K90mix).